The chain runs to 856 residues: DNA mismatch repair protein MutS (856 aa).

An ATP-binding site is contributed by 623-630 (GPNMSGKS).

It belongs to the DNA mismatch repair MutS family.

Its function is as follows. This protein is involved in the repair of mismatches in DNA. It is possible that it carries out the mismatch recognition step. This protein has a weak ATPase activity. This Natronomonas pharaonis (strain ATCC 35678 / DSM 2160 / CIP 103997 / JCM 8858 / NBRC 14720 / NCIMB 2260 / Gabara) (Halobacterium pharaonis) protein is DNA mismatch repair protein MutS.